We begin with the raw amino-acid sequence, 445 residues long: ATP-dependent protease ATPase subunit HslU (445 aa).

Residues Ile18, 60–65, Asp258, Glu323, and Arg395 contribute to the ATP site; that span reads GVGKTE.

It belongs to the ClpX chaperone family. HslU subfamily. As to quaternary structure, a double ring-shaped homohexamer of HslV is capped on each side by a ring-shaped HslU homohexamer. The assembly of the HslU/HslV complex is dependent on binding of ATP.

Its subcellular location is the cytoplasm. In terms of biological role, ATPase subunit of a proteasome-like degradation complex; this subunit has chaperone activity. The binding of ATP and its subsequent hydrolysis by HslU are essential for unfolding of protein substrates subsequently hydrolyzed by HslV. HslU recognizes the N-terminal part of its protein substrates and unfolds these before they are guided to HslV for hydrolysis. This chain is ATP-dependent protease ATPase subunit HslU, found in Syntrophotalea carbinolica (strain DSM 2380 / NBRC 103641 / GraBd1) (Pelobacter carbinolicus).